The primary structure comprises 279 residues: 3-methyl-2-oxobutanoate hydroxymethyltransferase (279 aa).

Mg(2+) contacts are provided by Asp53 and Asp92. 3-methyl-2-oxobutanoate contacts are provided by residues 53–54 (DS), Asp92, and Lys122. Residue Glu124 participates in Mg(2+) binding. Glu191 serves as the catalytic Proton acceptor.

This sequence belongs to the PanB family. In terms of assembly, homodecamer; pentamer of dimers. Mg(2+) serves as cofactor.

It is found in the cytoplasm. The enzyme catalyses 3-methyl-2-oxobutanoate + (6R)-5,10-methylene-5,6,7,8-tetrahydrofolate + H2O = 2-dehydropantoate + (6S)-5,6,7,8-tetrahydrofolate. The protein operates within cofactor biosynthesis; (R)-pantothenate biosynthesis; (R)-pantoate from 3-methyl-2-oxobutanoate: step 1/2. In terms of biological role, catalyzes the reversible reaction in which hydroxymethyl group from 5,10-methylenetetrahydrofolate is transferred onto alpha-ketoisovalerate to form ketopantoate. This chain is 3-methyl-2-oxobutanoate hydroxymethyltransferase, found in Maricaulis maris (strain MCS10) (Caulobacter maris).